Here is a 299-residue protein sequence, read N- to C-terminus: Large ribosomal subunit protein uL18 (299 aa).

Belongs to the universal ribosomal protein uL18 family. Component of the large ribosomal subunit (LSU). Interacts with Fmr1 to form the RNA-induced silencing complex (RISC), a ribonucleoprotein (RNP) complex involved in translation regulation, other components of the complex are Rm62, RpL11, AGO2 and Dcr-1.

Its subcellular location is the cytoplasm. It localises to the nucleus. Its function is as follows. Component of the ribosome, a large ribonucleoprotein complex responsible for the synthesis of proteins in the cell. The small ribosomal subunit (SSU) binds messenger RNAs (mRNAs) and translates the encoded message by selecting cognate aminoacyl-transfer RNA (tRNA) molecules. The large subunit (LSU) contains the ribosomal catalytic site termed the peptidyl transferase center (PTC), which catalyzes the formation of peptide bonds, thereby polymerizing the amino acids delivered by tRNAs into a polypeptide chain. The nascent polypeptides leave the ribosome through a tunnel in the LSU and interact with protein factors that function in enzymatic processing, targeting, and the membrane insertion of nascent chains at the exit of the ribosomal tunnel. The sequence is that of Large ribosomal subunit protein uL18 (RpL5) from Drosophila melanogaster (Fruit fly).